A 300-amino-acid polypeptide reads, in one-letter code: Ribosomal RNA small subunit methyltransferase H (300 aa).

S-adenosyl-L-methionine is bound by residues 33–35 (GGH), D52, F79, D100, and Q107.

The protein belongs to the methyltransferase superfamily. RsmH family.

The protein localises to the cytoplasm. The enzyme catalyses cytidine(1402) in 16S rRNA + S-adenosyl-L-methionine = N(4)-methylcytidine(1402) in 16S rRNA + S-adenosyl-L-homocysteine + H(+). In terms of biological role, specifically methylates the N4 position of cytidine in position 1402 (C1402) of 16S rRNA. The protein is Ribosomal RNA small subunit methyltransferase H of Mycoplasmopsis agalactiae (strain NCTC 10123 / CIP 59.7 / PG2) (Mycoplasma agalactiae).